The chain runs to 278 residues: Pyrroline-5-carboxylate reductase (278 aa).

It belongs to the pyrroline-5-carboxylate reductase family.

The protein localises to the cytoplasm. The enzyme catalyses L-proline + NADP(+) = (S)-1-pyrroline-5-carboxylate + NADPH + 2 H(+). It catalyses the reaction L-proline + NAD(+) = (S)-1-pyrroline-5-carboxylate + NADH + 2 H(+). It functions in the pathway amino-acid biosynthesis; L-proline biosynthesis; L-proline from L-glutamate 5-semialdehyde: step 1/1. In Actinidia chinensis var. chinensis (Chinese soft-hair kiwi), this protein is Pyrroline-5-carboxylate reductase.